The primary structure comprises 185 residues: Alpha-S1-casein (185 aa).

The signal sequence occupies residues 1–15 (MRLLILTCLVAVALA). 10 positions are modified to phosphoserine: Ser31, Ser33, Ser41, Ser71, Ser85, Ser86, Ser88, Ser89, Ser90, and Ser91.

The protein belongs to the alpha-casein family. As to quaternary structure, heteromultimers of alpha-s1 casein and kappa-casein; disulfide-linked. In terms of processing, not glycosylated. As to expression, mammary gland specific. Secreted in milk.

Its subcellular location is the secreted. Important role in the capacity of milk to transport calcium phosphate. Its function is as follows. Casoxin D acts as opioid antagonist and has vasorelaxing activity mediated by bradykinin B1 receptors. This chain is Alpha-S1-casein (CSN1S1), found in Homo sapiens (Human).